The following is a 523-amino-acid chain: Leucine-rich repeat-containing protein 27 (523 aa).

The disordered stretch occupies residues 1 to 26; the sequence is MEDTSPQAVAEKAAKDPKAAKDLKDD. A compositionally biased stretch (basic and acidic residues) spans 12-26; that stretch reads KAAKDPKAAKDLKDD. 5 LRR repeats span residues 55-76, 77-98, 101-122, 124-145, and 147-168; these read SSPV…FKIP, NLQQ…FFQL, NLTW…IGSH, HLKT…LGQV, and TLTA…IVQK. Disordered stretches follow at residues 206 to 236 and 372 to 394; these read QYPV…ADFF and REQT…HSNM. Composition is skewed to basic and acidic residues over residues 227-236 and 372-385; these read DQEKEKADFF and REQT…RELS. 2 coiled-coil regions span residues 335–374 and 463–494; these read VHAN…WREQ and MQDI…TLNK. A disordered region spans residues 503 to 523; it reads GNLSLHPPASQPQNIFFNTKS. The span at 513 to 523 shows a compositional bias: polar residues; it reads QPQNIFFNTKS.

In Mus musculus (Mouse), this protein is Leucine-rich repeat-containing protein 27 (Lrrc27).